Consider the following 376-residue polypeptide: Quinolinate synthase (376 aa).

2 residues coordinate iminosuccinate: histidine 57 and serine 78. Cysteine 123 provides a ligand contact to [4Fe-4S] cluster. Residues tyrosine 149–asparagine 151 and serine 166 contribute to the iminosuccinate site. Cysteine 210 provides a ligand contact to [4Fe-4S] cluster. Iminosuccinate is bound by residues histidine 236–glutamate 238 and threonine 253. Residue cysteine 307 participates in [4Fe-4S] cluster binding.

The protein belongs to the quinolinate synthase family. Type 1 subfamily. It depends on [4Fe-4S] cluster as a cofactor.

Its subcellular location is the cytoplasm. It carries out the reaction iminosuccinate + dihydroxyacetone phosphate = quinolinate + phosphate + 2 H2O + H(+). It functions in the pathway cofactor biosynthesis; NAD(+) biosynthesis; quinolinate from iminoaspartate: step 1/1. Catalyzes the condensation of iminoaspartate with dihydroxyacetone phosphate to form quinolinate. This is Quinolinate synthase from Paraburkholderia phymatum (strain DSM 17167 / CIP 108236 / LMG 21445 / STM815) (Burkholderia phymatum).